Consider the following 955-residue polypeptide: Glycine dehydrogenase (decarboxylating) (955 aa).

Lys702 carries the post-translational modification N6-(pyridoxal phosphate)lysine.

It belongs to the GcvP family. As to quaternary structure, the glycine cleavage system is composed of four proteins: P, T, L and H. Requires pyridoxal 5'-phosphate as cofactor.

The catalysed reaction is N(6)-[(R)-lipoyl]-L-lysyl-[glycine-cleavage complex H protein] + glycine + H(+) = N(6)-[(R)-S(8)-aminomethyldihydrolipoyl]-L-lysyl-[glycine-cleavage complex H protein] + CO2. The glycine cleavage system catalyzes the degradation of glycine. The P protein binds the alpha-amino group of glycine through its pyridoxal phosphate cofactor; CO(2) is released and the remaining methylamine moiety is then transferred to the lipoamide cofactor of the H protein. The chain is Glycine dehydrogenase (decarboxylating) from Stenotrophomonas maltophilia (strain R551-3).